A 689-amino-acid chain; its full sequence is Glycine--tRNA ligase beta subunit (689 aa).

Belongs to the class-II aminoacyl-tRNA synthetase family. Tetramer of two alpha and two beta subunits.

The protein resides in the cytoplasm. It carries out the reaction tRNA(Gly) + glycine + ATP = glycyl-tRNA(Gly) + AMP + diphosphate. The sequence is that of Glycine--tRNA ligase beta subunit from Salmonella choleraesuis (strain SC-B67).